We begin with the raw amino-acid sequence, 38 residues long: Large ribosomal subunit protein bL36 (38 aa).

It belongs to the bacterial ribosomal protein bL36 family.

In Enterococcus faecalis (strain ATCC 700802 / V583), this protein is Large ribosomal subunit protein bL36.